We begin with the raw amino-acid sequence, 603 residues long: Coagulation factor XII (603 aa).

Residues 1 to 18 form the signal peptide; it reads GRLLLGSLLVSLESALSA. The Fibronectin type-II domain occupies 41–89; the sequence is VTGEPCYFPFQYNRQLYHHCIHKGRPGPRPWCATTPNFDQDQQWAYCLE. Cystine bridges form between Cys-46-Cys-72, Cys-60-Cys-87, Cys-97-Cys-109, Cys-103-Cys-118, Cys-120-Cys-129, Cys-134-Cys-162, Cys-160-Cys-169, Cys-177-Cys-188, Cys-182-Cys-197, Cys-199-Cys-208, Cys-216-Cys-294, Cys-237-Cys-276, Cys-265-Cys-289, Cys-345-Cys-472, Cys-383-Cys-399, Cys-391-Cys-461, Cys-422-Cys-425, Cys-488-Cys-557, Cys-520-Cys-536, and Cys-547-Cys-578. An EGF-like 1 domain is found at 93-130; it reads VKDHCSKHNPCQRGGICVNTLSSPHCLCPDHLTGKHCQ. The Fibronectin type-I domain maps to 132–172; sequence EKCFEPQLHRFFHENEIWFRTGPAGVAKCHCKGPDAHCKQM. The EGF-like 2 domain maps to 173 to 209; the sequence is HSQECQTNPCLNGGRCLEVEGHHLCDCPMGYTGPFCD. Residues 216–294 form the Kringle domain; it reads CYEGRGVSYR…SWEYCDLAQC (79 aa). N-linked (GlcNAc...) asparagine glycosylation is found at Asn-248 and Asn-270. Residues 359 to 602 form the Peptidase S1 domain; sequence IVGGLVALPG…YLTWIQKHTA (244 aa). The active-site Charge relay system is His-398. A glycan (N-linked (GlcNAc...) asparagine) is linked at Asn-419. The active-site Charge relay system is Asp-447. Ser-551 (charge relay system) is an active-site residue.

This sequence belongs to the peptidase S1 family. In terms of assembly, interacts with HRG; the interaction, which is enhanced in the presence of zinc ions and inhibited by heparin-binding, inhibits factor XII autoactivation and contact-initiated coagulation. In terms of processing, O- and N-glycosylated.

Its subcellular location is the secreted. The enzyme catalyses Selective cleavage of Arg-|-Ile bonds in factor VII to form factor VIIa and factor XI to form factor XIa.. Its activity is regulated as follows. Activity is promoted in the presence of negatively charged surfaces. Factor XII is a serum glycoprotein that participates in the initiation of blood coagulation, fibrinolysis, and the generation of bradykinin and angiotensin. Prekallikrein is cleaved by factor XII to form kallikrein, which then cleaves factor XII first to alpha-factor XIIa and then trypsin cleaves it to beta-factor XIIa. Alpha-factor XIIa activates factor XI to factor XIa. In Cavia porcellus (Guinea pig), this protein is Coagulation factor XII (F12).